The sequence spans 125 residues: Ribosome-binding factor A (125 aa).

The protein belongs to the RbfA family. In terms of assembly, monomer. Binds 30S ribosomal subunits, but not 50S ribosomal subunits or 70S ribosomes.

It is found in the cytoplasm. In terms of biological role, one of several proteins that assist in the late maturation steps of the functional core of the 30S ribosomal subunit. Associates with free 30S ribosomal subunits (but not with 30S subunits that are part of 70S ribosomes or polysomes). Required for efficient processing of 16S rRNA. May interact with the 5'-terminal helix region of 16S rRNA. The sequence is that of Ribosome-binding factor A from Desulfitobacterium hafniense (strain DSM 10664 / DCB-2).